Reading from the N-terminus, the 256-residue chain is Small ribosomal subunit protein eS1 (256 aa).

A2 is modified (N-acetylalanine; partial).

Belongs to the eukaryotic ribosomal protein eS1 family. As to quaternary structure, component of the small ribosomal subunit. Mature ribosomes consist of a small (40S) and a large (60S) subunit. The 40S subunit contains about 33 different proteins and 1 molecule of RNA (18S). The 60S subunit contains about 49 different proteins and 3 molecules of RNA (25S, 5.8S and 5S).

Its subcellular location is the cytoplasm. The chain is Small ribosomal subunit protein eS1 from Meyerozyma guilliermondii (strain ATCC 6260 / CBS 566 / DSM 6381 / JCM 1539 / NBRC 10279 / NRRL Y-324) (Yeast).